The primary structure comprises 657 residues: MNMPVNKSPMINTCGGISSPYHEELWKLNFQHLSGERGHKSRPTFSITKEFILRFNQTQNSKEKEELLELARKIILRCKRKLGLKTLGSGRHVHLPAAWTEVIYLAQCKGEIQDESLNMLYASLDHASFDYDHLPALFFVAESVLYRLCCDASLKTYLYSVEIKLAKIGYLVFLRLFIFFLHGHLESFKQHLLRLQPYLYALSFSGASYHKYPNIFSNVQFILKASEIIGKRELRSESIFRPVEDKKRYENTDSDMGGYEINHLLWHCVAAWSCVQNNSPQLNNVLEHLVFHKTQLQKKCWLDSVLALLVLGEAAKLNMACLKALMDVVRDFVSSIMSVQNQEESCKVDDFSWAWNVVYIYTVILAEICLYAATSDLRKTALIGFCHCKSSQKNILYLDKSVPPELKETSILSLLEYFSSKMSENCDQVVWTGYYGLVYNLVKISWELQGDEEQDGLRNMIWQTLQKTKDYEEDVRIQNAINIAQAELNDPTDPFTRYSTNISSNVGEEVFSKYIGWRIANTLSKLFFPPIEAHFLPLKKPSIKKDQTKYPNKKLESVKKQVLHFTVREHPSVSEIPMFPYPDFFTKADKELAKIIDHHWQEELKIREKEDAICKAQELKDKKLAEKNHFQEVMKKREEKLHKQTKPYELPYRKEVI.

2 consecutive transmembrane segments (helical) span residues 168–188 and 353–373; these read IGYL…LESF and WAWN…LYAA.

Its subcellular location is the membrane. Its function is as follows. Plays a critical role for male fertility and sperm motility by regulating sperm cytoplasm removal and maintaining axoneme integrity. This is Transmembrane protein 232 (TMEM232) from Homo sapiens (Human).